We begin with the raw amino-acid sequence, 1005 residues long: Mitogen-activated protein kinase kinase kinase 10 (1005 aa).

An SH3 domain is found at 32–96; it reads VSNPLWMAVF…PSNYVVSDDK (65 aa). Residues 118 to 380 enclose the Protein kinase domain; that stretch reads LNLDEIIGVG…SCILEQLTTI (263 aa). Residues 124–132 and Lys145 each bind ATP; that span reads IGVGGFGKV. The active-site Proton acceptor is Asp242. Leucine-zipper regions lie at residues 404-425 and 439-460; these read IQQM…EEEL and LKRR…ELNI. 4 disordered regions span residues 551–611, 647–676, 712–736, and 758–940; these read SVLK…KHTP, QSDH…QSRR, FQWA…GEDS, and RSLI…AEGA. Composition is skewed to basic and acidic residues over residues 576 to 588 and 648 to 658; these read QKER…RLKT and SDHRSHPEDTA. 2 stretches are compositionally biased toward basic and acidic residues: residues 761–786 and 799–809; these read IRSD…EDRG and YKVESFKRDPK. Positions 810 to 826 are enriched in polar residues; that stretch reads QSLTPTHVTVGRNNTTE. The segment covering 862–879 has biased composition (pro residues); that stretch reads EPSPFPRLPDPHFVFPPP. A compositionally biased stretch (low complexity) spans 915-940; sequence SLSQTHSSSPSSGGGDACSSGSAEGA.

Belongs to the protein kinase superfamily. STE Ser/Thr protein kinase family. MAP kinase kinase kinase subfamily. In terms of assembly, homodimer. Binds to the GTPase rac1 but not cdc42 or rhoA. Interacts (via kinase domain) with pak1 (via kinase domain). Interacts with the ubiquitin-conjugating enzyme ube2d4. The cofactor is Mg(2+). Post-translationally, autophosphorylation on serine and threonine residues within the activation loop plays a role in enzyme activation. In terms of processing, mono- and poly-ubiquitinated. In adults, strongly expressed in the brain and spleen with lower levels in pancreas, heart, muscle and kidney (at protein level). In the developing embryo, expressed at stage 22 in the cement gland. Weakly expressed in the pronephros from stage 24 or 25, with expression increasing in strength by stage 30 and continuing at least until stage 37. Expression in the developing pronephros correlates with epithelialization of the proximal pronephric tubules.

It catalyses the reaction L-seryl-[protein] + ATP = O-phospho-L-seryl-[protein] + ADP + H(+). The catalysed reaction is L-threonyl-[protein] + ATP = O-phospho-L-threonyl-[protein] + ADP + H(+). Homodimerization via the leucine zipper domains is required for autophosphorylation and subsequent activation. In terms of biological role, activates the JUN N-terminal pathway. Essential for pronephros and cement gland development. The sequence is that of Mitogen-activated protein kinase kinase kinase 10 (map3k10) from Xenopus laevis (African clawed frog).